The following is a 1284-amino-acid chain: DNA-directed RNA polymerase subunit beta (1284 aa).

This sequence belongs to the RNA polymerase beta chain family. In terms of assembly, the RNAP catalytic core consists of 2 alpha, 1 beta, 1 beta' and 1 omega subunit. When a sigma factor is associated with the core the holoenzyme is formed, which can initiate transcription.

The catalysed reaction is RNA(n) + a ribonucleoside 5'-triphosphate = RNA(n+1) + diphosphate. In terms of biological role, DNA-dependent RNA polymerase catalyzes the transcription of DNA into RNA using the four ribonucleoside triphosphates as substrates. This is DNA-directed RNA polymerase subunit beta from Mesoplasma florum (strain ATCC 33453 / NBRC 100688 / NCTC 11704 / L1) (Acholeplasma florum).